The following is a 176-amino-acid chain: Adenine phosphoribosyltransferase (176 aa).

This sequence belongs to the purine/pyrimidine phosphoribosyltransferase family. Homodimer.

It is found in the cytoplasm. The catalysed reaction is AMP + diphosphate = 5-phospho-alpha-D-ribose 1-diphosphate + adenine. Its pathway is purine metabolism; AMP biosynthesis via salvage pathway; AMP from adenine: step 1/1. Functionally, catalyzes a salvage reaction resulting in the formation of AMP, that is energically less costly than de novo synthesis. The polypeptide is Adenine phosphoribosyltransferase (Thermobifida fusca (strain YX)).